Consider the following 143-residue polypeptide: Transcriptional regulator MraZ (143 aa).

SpoVT-AbrB domains lie at threonine 5–glutamate 47 and threonine 76–alanine 119.

It belongs to the MraZ family. Forms oligomers.

The protein localises to the cytoplasm. Its subcellular location is the nucleoid. The sequence is that of Transcriptional regulator MraZ from Rhodococcus jostii (strain RHA1).